The following is a 39-amino-acid chain: TIINVKCTSPKQCSKPCKELYGSSAGAKCMNGKCKCYNN.

Cystine bridges form between C7–C29, C13–C34, and C17–C36. Residues 26–34 (GAKCMNGKC) are interaction with Ca(2+)-activated K(+) channels. The residue at position 39 (N39) is an Asparagine amide.

This sequence belongs to the short scorpion toxin superfamily. Potassium channel inhibitor family. Alpha-KTx 02 subfamily. Expressed by the venom gland.

The protein resides in the secreted. Blocks voltage-gated potassium channels (mKv1.1/KCNA1 (Kd&gt;25 nM), rKv1.2/KCNA2 (Kd=2 nM), mKv1.3/KCNA3 (Kd=1 nM), hKv1.5/KCNA5 (Kd&gt;25 nM) and mKv3.1/KCNC1 (Kd&gt;25 nM)) and calcium-activated potassium channels (KCa1.1/KCNMA1 and KCa3.1/KCNN4, Kd&gt;25 nM). This Centruroides noxius (Mexican scorpion) protein is Potassium channel toxin alpha-KTx 2.1.